We begin with the raw amino-acid sequence, 432 residues long: C4-dicarboxylate transport protein (432 aa).

The next 8 membrane-spanning stretches (helical) occupy residues 8 to 28, 44 to 64, 78 to 98, 148 to 168, 188 to 208, 222 to 242, 307 to 327, and 355 to 375; these read ILYV…HYWP, LIKM…IAGM, LLYF…AAHL, GDIL…AVLG, IVHV…AFTI, LIGT…GTIA, IYMT…LTLM, and AATL…ILGI.

It belongs to the dicarboxylate/amino acid:cation symporter (DAACS) (TC 2.A.23) family.

It is found in the cell inner membrane. Its function is as follows. Responsible for the transport of dicarboxylates such as succinate, fumarate, and malate from the periplasm across the membrane. The chain is C4-dicarboxylate transport protein from Cupriavidus necator (strain ATCC 17699 / DSM 428 / KCTC 22496 / NCIMB 10442 / H16 / Stanier 337) (Ralstonia eutropha).